A 121-amino-acid polypeptide reads, in one-letter code: Large ribosomal subunit protein bL19 (121 aa).

Belongs to the bacterial ribosomal protein bL19 family.

In terms of biological role, this protein is located at the 30S-50S ribosomal subunit interface and may play a role in the structure and function of the aminoacyl-tRNA binding site. This is Large ribosomal subunit protein bL19 from Chlorobaculum tepidum (strain ATCC 49652 / DSM 12025 / NBRC 103806 / TLS) (Chlorobium tepidum).